We begin with the raw amino-acid sequence, 1086 residues long: Auxin response factor 19 (1086 aa).

The TF-B3 DNA-binding region spans 126–228; sequence FCKTLTASDT…QLMLGIRRAN (103 aa). The span at 454-485 shows a compositional bias: polar residues; that stretch reads PSKLLNFQSPNLSSANSQFNKPNTVNHISQQM. Disordered regions lie at residues 454-504, 545-564, 624-647, and 659-788; these read PSKL…QQQQ, QSPN…QSML, LSQN…QQLQ, and QQQS…SVFE. Residues 486–504 are compositionally biased toward low complexity; it reads QAQPAMVKSQQQQQQQQQQ. The segment covering 659 to 697 has biased composition (low complexity); the sequence is QQQSIPPVSSSLQPQLSALQQTQSHQLQQLLSSQNQQPL. Residues 700-710 show a composition bias toward polar residues; that stretch reads GNNSFPASTFM. The span at 711 to 724 shows a compositional bias: low complexity; the sequence is QPPQIQVSPQQQGQ. Positions 747–771 are enriched in polar residues; the sequence is SCSTSPSANNTGHDNVSPTNFLSRN. Residues 772–785 are compositionally biased toward low complexity; sequence QQQGQAASVSASDS. Residues 958–1051 form the PB1 domain; the sequence is RTYTKVQKRG…EVQQMSLDGD (94 aa).

The protein belongs to the ARF family. Homodimers and heterodimers. Interacts with the auxin-responsive protein IAA1. Binds to JMJ30. Binds to ATXR2 in the nucleus.

It is found in the nucleus. Its function is as follows. Auxin response factors (ARFs) are transcriptional factors that bind specifically to the DNA sequence 5'-TGTCTC-3' found in the auxin-responsive promoter elements (AuxREs). Could act as transcriptional activator or repressor. Formation of heterodimers with Aux/IAA proteins may alter their ability to modulate early auxin response genes expression. Involved in ethylene responses. Regulates lateral root formation through direct regulation of LBD16 and/or LBD29. Functionally redundant with ARF7. Involved in cellular dedifferentiation during callus formation on callus-inducing medium (CIM) and in an ATXR2-dependent manner. In Arabidopsis thaliana (Mouse-ear cress), this protein is Auxin response factor 19.